A 369-amino-acid chain; its full sequence is Serpentine receptor class epsilon-2 (369 aa).

Topologically, residues 1 to 20 (MLIQYHKISNNDPNRIQLLS) are extracellular. The helical transmembrane segment at 21-41 (MIFCEIILLIFELFEFAAIIF) threads the bilayer. The Cytoplasmic portion of the chain corresponds to 42-55 (NMSRYQFHFNLKVV). The chain crosses the membrane as a helical span at residues 56–76 (VGYAIFAYWFDIIARITIAFF). Residues 77 to 118 (EIGLFNLDDQTIAVETEKLPWNYKNMFFMLLFCCSTYRVYFM) lie on the Extracellular side of the membrane. A helical membrane pass occupies residues 119–139 (FLICSVTLLLAVERFLATIWV). Topologically, residues 140–148 (STYESVQHK) are cytoplasmic. The chain crosses the membrane as a helical span at residues 149-169 (WVSIVLTSTNSIAGIFGSLLF). Residues 170-178 (HYELIFDTA) lie on the Extracellular side of the membrane. The helical transmembrane segment at 179 to 199 (VWCSLGLCFNFVSIFLYVILF) threads the bilayer. At 200 to 234 (NSNKSKIELCQTREITQSYTLSLRFQLNENLKIMN) the chain is on the cytoplasmic side. A helical transmembrane segment spans residues 235 to 255 (WIKNSILVVTCFNTLLAGFLI). Residues 256-274 (ASNNEYLKNDYPVLVKCCH) lie on the Extracellular side of the membrane. A helical transmembrane segment spans residues 275–295 (TFLNLGIAIYAQVVFFVAILA). Residues 296-369 (DRHFRTYFLR…VAKKKRFWRV (74 aa)) lie on the Cytoplasmic side of the membrane.

This sequence belongs to the nematode receptor-like protein sre family.

It localises to the cell membrane. The sequence is that of Serpentine receptor class epsilon-2 (sre-2) from Caenorhabditis elegans.